We begin with the raw amino-acid sequence, 858 residues long: DNA mismatch repair protein MutS (858 aa).

Position 618 to 625 (618 to 625) interacts with ATP; the sequence is GPNMGGKS.

Belongs to the DNA mismatch repair MutS family.

Its function is as follows. This protein is involved in the repair of mismatches in DNA. It is possible that it carries out the mismatch recognition step. This protein has a weak ATPase activity. The chain is DNA mismatch repair protein MutS from Shewanella woodyi (strain ATCC 51908 / MS32).